A 370-amino-acid chain; its full sequence is Aminomethyltransferase (370 aa).

It belongs to the GcvT family. The glycine cleavage system is composed of four proteins: P, T, L and H.

The enzyme catalyses N(6)-[(R)-S(8)-aminomethyldihydrolipoyl]-L-lysyl-[protein] + (6S)-5,6,7,8-tetrahydrofolate = N(6)-[(R)-dihydrolipoyl]-L-lysyl-[protein] + (6R)-5,10-methylene-5,6,7,8-tetrahydrofolate + NH4(+). In terms of biological role, the glycine cleavage system catalyzes the degradation of glycine. This Leptospira biflexa serovar Patoc (strain Patoc 1 / Ames) protein is Aminomethyltransferase.